Here is a 119-residue protein sequence, read N- to C-terminus: Large ribosomal subunit protein uL18 (119 aa).

The protein belongs to the universal ribosomal protein uL18 family. Part of the 50S ribosomal subunit; part of the 5S rRNA/L5/L18/L25 subcomplex. Contacts the 5S and 23S rRNAs.

Its function is as follows. This is one of the proteins that bind and probably mediate the attachment of the 5S RNA into the large ribosomal subunit, where it forms part of the central protuberance. The polypeptide is Large ribosomal subunit protein uL18 (Anaeromyxobacter dehalogenans (strain 2CP-1 / ATCC BAA-258)).